We begin with the raw amino-acid sequence, 1401 residues long: DNA-directed RNA polymerase subunit beta' (1401 aa).

Residues Cys-70, Cys-72, Cys-85, and Cys-88 each contribute to the Zn(2+) site. Mg(2+) is bound by residues Asp-460, Asp-462, and Asp-464. The Zn(2+) site is built by Cys-808, Cys-882, Cys-889, and Cys-892.

Belongs to the RNA polymerase beta' chain family. As to quaternary structure, the RNAP catalytic core consists of 2 alpha, 1 beta, 1 beta' and 1 omega subunit. When a sigma factor is associated with the core the holoenzyme is formed, which can initiate transcription. Mg(2+) is required as a cofactor. It depends on Zn(2+) as a cofactor.

The enzyme catalyses RNA(n) + a ribonucleoside 5'-triphosphate = RNA(n+1) + diphosphate. In terms of biological role, DNA-dependent RNA polymerase catalyzes the transcription of DNA into RNA using the four ribonucleoside triphosphates as substrates. The polypeptide is DNA-directed RNA polymerase subunit beta' (Legionella pneumophila (strain Lens)).